The primary structure comprises 523 residues: Succinate-semialdehyde dehydrogenase, mitochondrial (523 aa).

The N-terminal 35 residues, 1–35 (MATCFLLRNFCAARPALRPPGRLLREPAGAQRRSY), are a transit peptide targeting the mitochondrion. The residue at position 114 (lysine 114) is an N6-acetyllysine; alternate. Lysine 114 carries the N6-succinyllysine; alternate modification. Residues lysine 123 and lysine 172 each carry the N6-succinyllysine modification. NAD(+)-binding positions include arginine 201 and 216 to 219 (KPAE). Arginine 201 provides a ligand contact to substrate. At lysine 253 the chain carries N6-acetyllysine; alternate. N6-succinyllysine; alternate is present on lysine 253. NAD(+) is bound at residue 272-277 (GSTATG). Residue glutamate 294 is the Proton acceptor of the active site. A substrate-binding site is contributed by arginine 322. Cysteine 328 (nucleophile) is an active-site residue. Cysteine 328 and cysteine 330 are oxidised to a cystine. The residue at position 353 (lysine 353) is an N6-acetyllysine. Lysine 390 is modified (N6-succinyllysine). Lysine 399 carries the post-translational modification N6-acetyllysine. Serine 486 is a substrate binding site. Phosphoserine is present on serine 487.

It belongs to the aldehyde dehydrogenase family. As to quaternary structure, homotetramer. Brain, pancreas, heart, liver, skeletal muscle, kidney. Lower in spleen, lung, kidney and testis.

Its subcellular location is the mitochondrion. The enzyme catalyses succinate semialdehyde + NAD(+) + H2O = succinate + NADH + 2 H(+). It functions in the pathway amino-acid degradation; 4-aminobutanoate degradation. With respect to regulation, redox-regulated. Inhibited under oxydizing conditions. Its function is as follows. Catalyzes one step in the degradation of the inhibitory neurotransmitter gamma-aminobutyric acid (GABA). This Rattus norvegicus (Rat) protein is Succinate-semialdehyde dehydrogenase, mitochondrial (Aldh5a1).